A 385-amino-acid polypeptide reads, in one-letter code: Chorismate synthase (385 aa).

NADP(+)-binding residues include Arg40 and Arg46. FMN is bound by residues 128–130 (RAS), 248–249 (QA), Gly293, 308–312 (KAIPS), and Arg334.

The protein belongs to the chorismate synthase family. Homotetramer. The cofactor is FMNH2.

It carries out the reaction 5-O-(1-carboxyvinyl)-3-phosphoshikimate = chorismate + phosphate. It functions in the pathway metabolic intermediate biosynthesis; chorismate biosynthesis; chorismate from D-erythrose 4-phosphate and phosphoenolpyruvate: step 7/7. Functionally, catalyzes the anti-1,4-elimination of the C-3 phosphate and the C-6 proR hydrogen from 5-enolpyruvylshikimate-3-phosphate (EPSP) to yield chorismate, which is the branch point compound that serves as the starting substrate for the three terminal pathways of aromatic amino acid biosynthesis. This reaction introduces a second double bond into the aromatic ring system. In Endomicrobium trichonymphae, this protein is Chorismate synthase.